Reading from the N-terminus, the 269-residue chain is Glutamate racemase (269 aa).

Substrate is bound by residues 14–15 and 46–47; these read DS and YS. The active-site Proton donor/acceptor is the Cys78. 79–80 is a substrate binding site; sequence NT. Cys189 serves as the catalytic Proton donor/acceptor. Substrate is bound at residue 190 to 191; that stretch reads TH.

It belongs to the aspartate/glutamate racemases family.

The catalysed reaction is L-glutamate = D-glutamate. It participates in cell wall biogenesis; peptidoglycan biosynthesis. Its function is as follows. Provides the (R)-glutamate required for cell wall biosynthesis. The sequence is that of Glutamate racemase from Haemophilus influenzae (strain ATCC 51907 / DSM 11121 / KW20 / Rd).